The primary structure comprises 432 residues: Septin-11 (432 aa).

Position 2 is an N-acetylalanine (alanine 2). Serine 9 bears the Phosphoserine mark. Residues 38–304 form the Septin-type G domain; that stretch reads QGFCFNILCV…ELYRRCKLEE (267 aa). The tract at residues 48–55 is G1 motif; that stretch reads GETGIGKS. GTP contacts are provided by residues 48–55, glycine 103, 184–192, glycine 238, and arginine 253; these read GETGIGKS and KADTIAKNE. Positions 100-103 are G3 motif; that stretch reads DTVG. The segment at 183 to 186 is G4 motif; that stretch reads AKAD. Residues 320–413 are a coiled coil; it reads QETYEAKRNE…LLQSQAQQSG (94 aa). Residues 403–416 show a composition bias toward low complexity; that stretch reads QLLQSQAQQSGAQQ. The segment at 403–432 is disordered; sequence QLLQSQAQQSGAQQTKKDKDKKNSPWLCTE.

The protein belongs to the TRAFAC class TrmE-Era-EngA-EngB-Septin-like GTPase superfamily. Septin GTPase family. In terms of assembly, septins polymerize into heterooligomeric protein complexes that form filaments, and can associate with cellular membranes, actin filaments and microtubules. Forms homooligomers. GTPase activity is required for filament formation. Interacts with SEPTIN7, SEPTIN9 and SEPTIN12.

The protein localises to the cytoplasm. It is found in the cytoskeleton. It localises to the synapse. The protein resides in the cell projection. Its subcellular location is the dendritic spine. The protein localises to the axon. Its function is as follows. Filament-forming cytoskeletal GTPase. May play a role in cytokinesis (Potential). May play a role in the cytoarchitecture of neurons, including dendritic arborization and dendritic spines, and in GABAergic synaptic connectivity. The sequence is that of Septin-11 from Macaca fascicularis (Crab-eating macaque).